A 117-amino-acid polypeptide reads, in one-letter code: Small ribosomal subunit protein uS8c (117 aa).

Belongs to the universal ribosomal protein uS8 family. As to quaternary structure, part of the 30S ribosomal subunit.

Its subcellular location is the plastid. The protein resides in the chloroplast. One of the primary rRNA binding proteins, it binds directly to 16S rRNA central domain where it helps coordinate assembly of the platform of the 30S subunit. This Cyanidioschyzon merolae (strain NIES-3377 / 10D) (Unicellular red alga) protein is Small ribosomal subunit protein uS8c (rps8).